The sequence spans 147 residues: Calcium-regulated heat stable protein 1 (147 aa).

Residues M1 to P12 are compositionally biased toward pro residues. The tract at residues M1 to R49 is disordered. Residue S2 is modified to N-acetylserine. Phosphoserine is present on residues S30, S32, and S41. At T45 the chain carries Phosphothreonine. Phosphoserine occurs at positions 52 and 58. The CSD domain maps to V62–T129. 2 positions are modified to phosphoserine: S146 and S147.

In terms of assembly, homodimer. Interacts with STYX. Post-translationally, can be phosphorylated by DYRK2 (in vitro). Dephosphorylated by calcineurin in a Ca(2+) dependent manner, and probably by PP2A or PP4 serine phosphatases in cAMP- and PKC-mediated pathways. In terms of tissue distribution, widely expressed.

The protein localises to the cytoplasm. It is found in the P-body. The protein resides in the cytoplasmic granule. Binds mRNA and regulates the stability of target mRNA. The sequence is that of Calcium-regulated heat stable protein 1 (Carhsp1) from Rattus norvegicus (Rat).